A 367-amino-acid polypeptide reads, in one-letter code: Heme A synthase (367 aa).

Helical transmembrane passes span Ile26–Ala46, Leu111–Gly131, Leu139–Val159, Leu174–Gly194, and Ala212–Leu232. His274 lines the heme pocket. 3 helical membrane passes run Ala276–Ala296, Ser305–Leu325, and Val327–Ile347. His335 lines the heme pocket.

This sequence belongs to the COX15/CtaA family. Type 2 subfamily. In terms of assembly, interacts with CtaB. It depends on heme b as a cofactor.

The protein localises to the cell membrane. It catalyses the reaction Fe(II)-heme o + 2 A + H2O = Fe(II)-heme a + 2 AH2. It functions in the pathway porphyrin-containing compound metabolism; heme A biosynthesis; heme A from heme O: step 1/1. Catalyzes the conversion of heme O to heme A by two successive hydroxylations of the methyl group at C8. The first hydroxylation forms heme I, the second hydroxylation results in an unstable dihydroxymethyl group, which spontaneously dehydrates, resulting in the formyl group of heme A. This is Heme A synthase from Sinorhizobium fredii (strain NBRC 101917 / NGR234).